We begin with the raw amino-acid sequence, 206 residues long: Large ribosomal subunit protein uL4 (206 aa).

Residues 43–78 form a disordered region; the sequence is ARSGNRKQKDREEVKHTTKKPWRQKGTGRARAGMSS. A compositionally biased stretch (basic and acidic residues) spans 49–58; the sequence is KQKDREEVKH. Residues 59–70 show a composition bias toward basic residues; it reads TTKKPWRQKGTG.

It belongs to the universal ribosomal protein uL4 family. As to quaternary structure, part of the 50S ribosomal subunit.

Its function is as follows. One of the primary rRNA binding proteins, this protein initially binds near the 5'-end of the 23S rRNA. It is important during the early stages of 50S assembly. It makes multiple contacts with different domains of the 23S rRNA in the assembled 50S subunit and ribosome. Forms part of the polypeptide exit tunnel. This Cupriavidus pinatubonensis (strain JMP 134 / LMG 1197) (Cupriavidus necator (strain JMP 134)) protein is Large ribosomal subunit protein uL4.